The following is a 123-amino-acid chain: Small ribosomal subunit protein uS12cz/uS12cy (123 aa).

Belongs to the universal ribosomal protein uS12 family. Part of the 30S ribosomal subunit.

It is found in the plastid. The protein localises to the chloroplast. In terms of biological role, with S4 and S5 plays an important role in translational accuracy. Located at the interface of the 30S and 50S subunits. This is Small ribosomal subunit protein uS12cz/uS12cy (rps12-A) from Drimys granadensis.